Here is a 192-residue protein sequence, read N- to C-terminus: MTTPSRRRLMRDFKKLQEDPPAGVSGAPTEDNILTWEAIIFGPQETPFEDGTFKLSLEFTEEYPNKPPTVKFISKMFHPNVYADGSICLDILQNRWSPTYDVAAILTSIQSLLDEPNPNSPANSLAAQLYQENRREYEKRVQQIVEQSWLNFGENEGDAVLKDDVEIEEIAAPGANDADDDRMDEGASGSNA.

Residues 1–28 (MTTPSRRRLMRDFKKLQEDPPAGVSGAP) form a disordered region. Residues 4 to 150 (PSRRRLMRDF…VQQIVEQSWL (147 aa)) enclose the UBC core domain. C88 acts as the Glycyl thioester intermediate in catalysis. Positions 171–192 (AAPGANDADDDRMDEGASGSNA) are disordered.

It belongs to the ubiquitin-conjugating enzyme family. Interacts with ubr-1 and rfp-1. Interacts with ubc-13.

It carries out the reaction S-ubiquitinyl-[E1 ubiquitin-activating enzyme]-L-cysteine + [E2 ubiquitin-conjugating enzyme]-L-cysteine = [E1 ubiquitin-activating enzyme]-L-cysteine + S-ubiquitinyl-[E2 ubiquitin-conjugating enzyme]-L-cysteine.. The protein operates within protein modification; protein ubiquitination. Its function is as follows. Catalyzes the covalent attachment of ubiquitin to other proteins. This is Ubiquitin-conjugating enzyme E2 1 (ubc-1) from Caenorhabditis elegans.